The chain runs to 95 residues: RING finger protein Z (95 aa).

Residue glycine 2 is the site of N-myristoyl glycine; by host attachment. The RING-type; atypical zinc-finger motif lies at 38-74 (CKSCWFANRGLIACSDHYLCLNCLTRLRSQSQFCGIC). A PTAP/PSAP motif motif is present at residues 88-91 (PSAP).

Belongs to the arenaviridae Z protein family. Interacts with protein NP; this interaction probably directs the encapsidated genome to budding sites. Interacts (via RING domain) with polymerase L; this interaction inhibits viral transcription and replication, Z partially blocks the product exit tunnel for the releasing nascent RNA product. Interacts with the glycoprotein complex; this interaction plays a role in virion budding. Interacts with host eIF4E; this interaction results in eIF4E reduced affinity for its substrate, the 5'-m7 G cap structure. Interacts (via late-budding domain) with host TSG101; this interaction is essential for budding and release of viral particles. Interacts with host RPLP0; this interaction may serve to load ribosome-like particles inside the virion. Interacts with host PML; this interaction induces PML bodies redistribution in the cytoplasm upon viral infection. Myristoylation is required for the role of RING finger protein Z in assembly and budding.

Its subcellular location is the virion. It localises to the host cytoplasm. The protein localises to the host perinuclear region. The protein resides in the host cell membrane. In terms of biological role, plays a crucial role in virion assembly and budding. Expressed late in the virus life cycle, it acts as an inhibitor of viral transcription and RNA synthesis by interacting with the viral polymerase L. Presumably recruits the NP encapsidated genome to cellular membranes at budding sites via direct interaction with NP. Plays critical roles in the final steps of viral release by interacting with host TSG101, a member of the vacuolar protein-sorting pathway and using other cellular host proteins involved in vesicle formation pathway. The budding of the virus progeny occurs after association of protein Z with the viral glycoprotein complex SSP-GP1-GP2 at the cell periphery, step that requires myristoylation of protein Z. Also selectively represses protein production by associating with host eIF4E. In cell-based minigenome assay, has an inhibitory effect on the ribonucleoprotein machinery (vRNP), which is responsible for the replication and transcription of the viral genome. The sequence is that of RING finger protein Z from Pirital mammarenavirus (isolate Rat/Venezuela/VAV-488/1995) (PIRV).